The chain runs to 159 residues: Defense protein l(2)34Fc (159 aa).

The signal sequence occupies residues 1–17; that stretch reads MFRLLVLAACLAISVHA. The 142-residue stretch at 18 to 159 folds into the Reelin domain; that stretch reads YSDGAPKAAC…GRVTKDIDVE (142 aa). Cys27 and Cys99 are joined by a disulfide.

This sequence belongs to the insect defense protein family.

The protein resides in the secreted. Its function is as follows. May have antimicrobial activity. A late response immune regulated gene that is negatively regulated by spz during the immune response. The protein is Defense protein l(2)34Fc (l(2)34Fc) of Drosophila melanogaster (Fruit fly).